We begin with the raw amino-acid sequence, 641 residues long: Mannosyl-oligosaccharide 1,2-alpha-mannosidase IB (641 aa).

An N-acetylthreonine modification is found at threonine 2. Residues 2-36 (TTPALLPLSGRRIPPLNLGPPSFPHHRATLRLSEK) lie on the Cytoplasmic side of the membrane. A helical; Signal-anchor for type II membrane protein membrane pass occupies residues 37–57 (FILLLILSAFITLCFGAFFFL). Residues 58 to 641 (PDSSKHKRFD…STLSGNPAVR (584 aa)) are Lumenal-facing. A disulfide bridge links cysteine 462 with cysteine 494. Glutamate 508 serves as the catalytic Proton donor. Threonine 619 provides a ligand contact to Ca(2+). A glycan (N-linked (GlcNAc...) asparagine) is linked at asparagine 631.

Belongs to the glycosyl hydrolase 47 family. Ca(2+) serves as cofactor.

The protein localises to the golgi apparatus membrane. The catalysed reaction is N(4)-(alpha-D-Man-(1-&gt;2)-alpha-D-Man-(1-&gt;2)-alpha-D-Man-(1-&gt;3)-[alpha-D-Man-(1-&gt;2)-alpha-D-Man-(1-&gt;3)-[alpha-D-Man-(1-&gt;2)-alpha-D-Man-(1-&gt;6)]-alpha-D-Man-(1-&gt;6)]-beta-D-Man-(1-&gt;4)-beta-D-GlcNAc-(1-&gt;4)-beta-D-GlcNAc)-L-asparaginyl-[protein] (N-glucan mannose isomer 9A1,2,3B1,2,3) + 4 H2O = N(4)-(alpha-D-Man-(1-&gt;3)-[alpha-D-Man-(1-&gt;3)-[alpha-D-Man-(1-&gt;6)]-alpha-D-Man-(1-&gt;6)]-beta-D-Man-(1-&gt;4)-beta-D-GlcNAc-(1-&gt;4)-beta-D-GlcNAc)-L-asparaginyl-[protein] (N-glucan mannose isomer 5A1,2) + 4 beta-D-mannose. It carries out the reaction N(4)-(alpha-D-Man-(1-&gt;2)-alpha-D-Man-(1-&gt;2)-alpha-D-Man-(1-&gt;3)-[alpha-D-Man-(1-&gt;3)-[alpha-D-Man-(1-&gt;2)-alpha-D-Man-(1-&gt;6)]-alpha-D-Man-(1-&gt;6)]-beta-D-Man-(1-&gt;4)-beta-D-GlcNAc-(1-&gt;4)-beta-D-GlcNAc)-L-asparaginyl-[protein] (N-glucan mannose isomer 8A1,2,3B1,3) + 3 H2O = N(4)-(alpha-D-Man-(1-&gt;3)-[alpha-D-Man-(1-&gt;3)-[alpha-D-Man-(1-&gt;6)]-alpha-D-Man-(1-&gt;6)]-beta-D-Man-(1-&gt;4)-beta-D-GlcNAc-(1-&gt;4)-beta-D-GlcNAc)-L-asparaginyl-[protein] (N-glucan mannose isomer 5A1,2) + 3 beta-D-mannose. It functions in the pathway protein modification; protein glycosylation. Its activity is regulated as follows. Inhibited by both 1-deoxymannojirimycin and kifunensine. In terms of biological role, involved in the maturation of Asn-linked oligosaccharides. Progressively trim alpha-1,2-linked mannose residues from Man(9)GlcNAc(2) to produce Man(5)GlcNAc(2). This chain is Mannosyl-oligosaccharide 1,2-alpha-mannosidase IB (Man1a2), found in Mus musculus (Mouse).